The chain runs to 378 residues: Erythronate-4-phosphate dehydrogenase (378 aa).

S45 and T66 together coordinate substrate. The NAD(+) site is built by D146 and T175. R208 is an active-site residue. Residue D232 participates in NAD(+) binding. E237 is a catalytic residue. H254 serves as the catalytic Proton donor. Residue G257 participates in NAD(+) binding. Residue Y258 coordinates substrate.

Belongs to the D-isomer specific 2-hydroxyacid dehydrogenase family. PdxB subfamily. In terms of assembly, homodimer.

The protein localises to the cytoplasm. The enzyme catalyses 4-phospho-D-erythronate + NAD(+) = (R)-3-hydroxy-2-oxo-4-phosphooxybutanoate + NADH + H(+). It participates in cofactor biosynthesis; pyridoxine 5'-phosphate biosynthesis; pyridoxine 5'-phosphate from D-erythrose 4-phosphate: step 2/5. Catalyzes the oxidation of erythronate-4-phosphate to 3-hydroxy-2-oxo-4-phosphonooxybutanoate. In Escherichia coli O127:H6 (strain E2348/69 / EPEC), this protein is Erythronate-4-phosphate dehydrogenase.